The chain runs to 129 residues: Glycine cleavage system H protein (129 aa).

In terms of domain architecture, Lipoyl-binding spans 24 to 106; the sequence is TYTVGITEHA…YAGGWIFKIK (83 aa). Lys65 is modified (N6-lipoyllysine).

Belongs to the GcvH family. The glycine cleavage system is composed of four proteins: P, T, L and H. It depends on (R)-lipoate as a cofactor.

Functionally, the glycine cleavage system catalyzes the degradation of glycine. The H protein shuttles the methylamine group of glycine from the P protein to the T protein. This chain is Glycine cleavage system H protein, found in Escherichia coli O139:H28 (strain E24377A / ETEC).